We begin with the raw amino-acid sequence, 427 residues long: Tumor necrosis factor receptor superfamily member 16 (427 aa).

The first 31 residues, 1–31 (MRRAGAACSAMDRLRLLLLLLLLLGVSFGGA), serve as a signal peptide directing secretion. At 32–254 (KETCSTGMYT…VVTRGTADNL (223 aa)) the chain is on the extracellular side. TNFR-Cys repeat units lie at residues 34-67 (TCST…QTVC), 69-110 (PCLD…DAVC), 111-149 (RCSY…NTVC), and 151-191 (ECPE…DAEC). Intrachain disulfides connect C35–C46, C47–C60, C50–C67, C70–C86, C89–C102, C92–C110, C112–C125, C128–C141, C131–C149, C152–C167, C170–C183, and C173–C191. N63 carries N-linked (GlcNAc...) asparagine glycosylation. A disordered region spans residues 197–223 (RWITRSTPPEGSDVTTPSTQEPEAPPE). A compositionally biased stretch (polar residues) spans 200 to 217 (TRSTPPEGSDVTTPSTQE). A helical transmembrane segment spans residues 255-275 (IPVYCSILAAVVVGLVAYIAF). Residues 276-427 (KRWNSCKQNK…CSESTATSPV (152 aa)) are Cytoplasmic-facing. Composition is skewed to polar residues over residues 284–294 (NKQGANSRPVN) and 308–329 (SGIS…TASG). Residues 284–334 (NKQGANSRPVNQTPPPEGEKLHSDSGISVDSQSLHDQQTHTQTASGQALKG) form a disordered region. S314 is subject to Phosphoserine. The interval 329-344 (GQALKGDGNLYSSLPL) is mediates interaction with KIDINS220. The region spanning 356-421 (GDTWRHLAGE…DIVESLCSES (66 aa)) is the Death domain.

In terms of assembly, homodimer; disulfide-linked. Heterodimer with SORCS2. The extracellular domains of the heterodimer bind NGF. The cytoplasmic region of the heterodimer binds TRIO. NGF binding mediates dissociation of TRIO from the receptor complex. Interacts with TRAF2, TRAF4, TRAF6, PTPN13 and RANBP9. Interacts through TRAF6 with SQSTM1 which bridges NGFR to NTRK1. Interacts with BEX1. Interacts with BEX3. Interacts with KIDINS220 and NTRK1. Can form a ternary complex with NTRK1 and KIDINS220 and this complex is affected by the expression levels of KIDINS220. An increase in KIDINS220 expression leads to a decreased association of NGFR and NTRK1. Interacts (via death domain) with RAB31. Interacts with NTRK2; may regulate the ligand specificity of the NTRK2 receptor. Interacts with LINGO1. Interacts with NRADD. Interacts with MAGED1; the interaction antagonizes the association NGFR:NTRK1. Interacts with RTN4R. Interacts (via death domain) with ARHGDIA and RIPK2. Interacts with BFAR. (Microbial infection) Binds to rabies virus glycoprotein Gs. In terms of processing, N-glycosylated. O-glycosylated. Phosphorylated on serine residues. In terms of tissue distribution, detected in Schwann cells. Detected in embryonic brain, in hippocampus neurons (at protein level). Detected in brain and spinal cord.

The protein resides in the cell membrane. It localises to the cytoplasm. Its subcellular location is the perikaryon. It is found in the cell projection. The protein localises to the growth cone. The protein resides in the dendritic spine. Functionally, low affinity neurotrophin receptor which can bind to mature NGF, BDNF, NTF3, and NTF4. Forms a heterodimeric receptor with SORCS2 that binds the precursor forms of NGF (proNGF), BDNF (proBDNF) and NTF3 (proNT3) with high affinity, and has much lower affinity for mature NGF and BDNF. Plays an important role in differentiation and survival of specific neuronal populations during development. Can mediate cell survival as well as cell death of neural cells. The heterodimeric receptor formed with SORCS2 plays a role in proBDNF-dependent synaptic plasticity, in hippocampal long term depression (LTD) and long term potentiation (LTP). Plays a role in the inactivation of RHOA. Plays a role in the regulation of the translocation of GLUT4 to the cell surface in adipocytes and skeletal muscle cells in response to insulin, probably by regulating RAB31 activity, and thereby contributes to the regulation of insulin-dependent glucose uptake. Necessary for the circadian oscillation of the clock genes BMAL1, PER1, PER2 and NR1D1 in the suprachiasmatic nucleus (SCN) of the brain and in liver and of the genes involved in glucose and lipid metabolism in the liver. (Microbial infection) Cell surface receptor for rabies virus glycoprotein Gs. Its function is as follows. Does not bind NGF, BDNF, NTF3, and NTF4. The chain is Tumor necrosis factor receptor superfamily member 16 (Ngfr) from Mus musculus (Mouse).